A 122-amino-acid polypeptide reads, in one-letter code: Large ribosomal subunit protein uL14 (122 aa).

The protein belongs to the universal ribosomal protein uL14 family. Part of the 50S ribosomal subunit. Forms a cluster with proteins L3 and L19. In the 70S ribosome, L14 and L19 interact and together make contacts with the 16S rRNA in bridges B5 and B8.

In terms of biological role, binds to 23S rRNA. Forms part of two intersubunit bridges in the 70S ribosome. The chain is Large ribosomal subunit protein uL14 from Brachyspira hyodysenteriae (strain ATCC 49526 / WA1).